A 437-amino-acid chain; its full sequence is UDP-N-acetylmuramate--L-alanine ligase (437 aa).

An ATP-binding site is contributed by 108–114 (GAHGKTS).

This sequence belongs to the MurCDEF family.

The protein localises to the cytoplasm. It catalyses the reaction UDP-N-acetyl-alpha-D-muramate + L-alanine + ATP = UDP-N-acetyl-alpha-D-muramoyl-L-alanine + ADP + phosphate + H(+). It participates in cell wall biogenesis; peptidoglycan biosynthesis. In terms of biological role, cell wall formation. The chain is UDP-N-acetylmuramate--L-alanine ligase from Staphylococcus aureus (strain COL).